A 64-amino-acid chain; its full sequence is Conotoxin Mr3.5 (64 aa).

The signal sequence occupies residues 1-19; sequence MSKLGVLLTICLLLFPLTA. Positions 20-46 are excised as a propeptide; the sequence is LPLDGDQPADQRAERTQAEKHSLPDPR. 3 cysteine pairs are disulfide-bonded: cysteine 49/cysteine 58, cysteine 50/cysteine 62, and cysteine 54/cysteine 63. Cysteine 63 is modified (cysteine amide).

Belongs to the conotoxin M superfamily. Expressed by the venom duct.

The protein localises to the secreted. The chain is Conotoxin Mr3.5 from Conus marmoreus (Marble cone).